The chain runs to 148 residues: Large ribosomal subunit protein bL9 (148 aa).

Belongs to the bacterial ribosomal protein bL9 family.

Functionally, binds to the 23S rRNA. The protein is Large ribosomal subunit protein bL9 of Clostridium perfringens (strain ATCC 13124 / DSM 756 / JCM 1290 / NCIMB 6125 / NCTC 8237 / Type A).